The sequence spans 150 residues: MKCPFCAFADSKVVDSRPDKEGSTIRRRRECESCSKRFTTHERVEEILPLVIKKDGRREPFDRMKLVAGVMKACEKRPVSVETIERLIDRLEVQMQESGEKEIPSKSLGEWVMTELHAIDQVAYVRFASVYRSFKDITEFMSELQELLKK.

The segment at 3-34 is a zinc-finger region; that stretch reads CPFCAFADSKVVDSRPDKEGSTIRRRRECESC. Positions 49-139 constitute an ATP-cone domain; sequence PLVIKKDGRR…VYRSFKDITE (91 aa).

It belongs to the NrdR family. Zn(2+) serves as cofactor.

Its function is as follows. Negatively regulates transcription of bacterial ribonucleotide reductase nrd genes and operons by binding to NrdR-boxes. This Geotalea daltonii (strain DSM 22248 / JCM 15807 / FRC-32) (Geobacter daltonii) protein is Transcriptional repressor NrdR.